The primary structure comprises 366 residues: Zinc finger CCCH domain-containing protein 11 (366 aa).

Residues 43–66 (LHQAVQPKPDPTKTAAKKKKEEEK) form a disordered region. Positions 54–79 (TKTAAKKKKEEEKAREKELNDLFKVA) form a coiled coil. C3H1-type zinc fingers lie at residues 90–117 (DPKSIVCEFFKVGQCQKGFKCKFSHDLN) and 160–198 (KPTDIVCKYFLDAVEKKQYGWFWVCPNGGKDCHYRHALP). Residues 208-234 (KALLEEESEKIAIEDEIEDQRKKVKTT) are a coiled coil. Positions 293-338 (YERQEESEANEEPSNKNQDEGPSSSTSNGKEVEESDDEDINIDDDL) are disordered. Over residues 312–321 (EGPSSSTSNG) the composition is skewed to polar residues. Residues 325 to 338 (EESDDEDINIDDDL) show a composition bias toward acidic residues.

In Oryza sativa subsp. japonica (Rice), this protein is Zinc finger CCCH domain-containing protein 11.